Reading from the N-terminus, the 197-residue chain is Probable GTP-binding protein EngB (197 aa).

The region spanning 22–195 (NLPEIAFVGR…VDYLFDDLVE (174 aa)) is the EngB-type G domain. Residues 30–37 (GRSNVGKS), 57–61 (GKTRL), 75–78 (DLPG), 142–145 (TKSD), and 174–176 (FSS) contribute to the GTP site. 2 residues coordinate Mg(2+): serine 37 and threonine 59.

It belongs to the TRAFAC class TrmE-Era-EngA-EngB-Septin-like GTPase superfamily. EngB GTPase family. Mg(2+) serves as cofactor.

Necessary for normal cell division and for the maintenance of normal septation. This chain is Probable GTP-binding protein EngB, found in Clostridium perfringens (strain 13 / Type A).